The following is a 479-amino-acid chain: Aspartyl/glutamyl-tRNA(Asn/Gln) amidotransferase subunit B (479 aa).

The protein belongs to the GatB/GatE family. GatB subfamily. As to quaternary structure, heterotrimer of A, B and C subunits.

The enzyme catalyses L-glutamyl-tRNA(Gln) + L-glutamine + ATP + H2O = L-glutaminyl-tRNA(Gln) + L-glutamate + ADP + phosphate + H(+). The catalysed reaction is L-aspartyl-tRNA(Asn) + L-glutamine + ATP + H2O = L-asparaginyl-tRNA(Asn) + L-glutamate + ADP + phosphate + 2 H(+). Functionally, allows the formation of correctly charged Asn-tRNA(Asn) or Gln-tRNA(Gln) through the transamidation of misacylated Asp-tRNA(Asn) or Glu-tRNA(Gln) in organisms which lack either or both of asparaginyl-tRNA or glutaminyl-tRNA synthetases. The reaction takes place in the presence of glutamine and ATP through an activated phospho-Asp-tRNA(Asn) or phospho-Glu-tRNA(Gln). In Geotalea uraniireducens (strain Rf4) (Geobacter uraniireducens), this protein is Aspartyl/glutamyl-tRNA(Asn/Gln) amidotransferase subunit B.